Here is a 367-residue protein sequence, read N- to C-terminus: Protein SUPPRESSOR OF FRI 4 (367 aa).

The BED-type zinc finger occupies 7–66 (RATEKVWCYYCDREFDDEKILVQHQKAKHFKCHVCHKKLSTASGMVIHVLQVHKENVTKV). Residues Cys-38, Cys-41, His-54, and His-59 each coordinate Zn(2+). The disordered stretch occupies residues 246 to 309 (PFSAPLPVGG…PPVIANKAPS (64 aa)). Over residues 273–295 (PNNSIPGGTNAHSYASGPNTSGP) the composition is skewed to polar residues.

In terms of assembly, homodimer. Component of the transcription activator complex FRI-C composed of FRI, FRL1, SUF4, FLX and FES1. Interacts with LD, ASHH2, FRL1, (via C-terminus) with FRI (via C-terminus), and with SWC6, a component of the SWR1 chromatin-remodeling complex. Binds to MED18 to regulate flowering time; recruits MED18 to FLC promoter. As to expression, expressed in root, shoot apex, leaves, stem and flowers. Expressed in expanding leaves, in the vasculature of fully expanded leaves, in the inflorescence, throughout young floral primordia, in the carpels of older flowers and in fertilized ovules.

The protein resides in the nucleus. Functionally, sequence-specific DNA binding factor that recognizes the 5'-CCAAATTTTAAGTTT-3' sequence. Recruits the FRI-C complex to the FLC promoter. Required for FRI-mediated FLC activation, but has no effect on the expression of MAF1, MAF2, MAF3, MAF5, UFC and CO. Dispensable for the reactivation of FLC in early embryogenesis, but required to maintain high levels of FLC expression in later embryonic and vegetative development. In Arabidopsis thaliana (Mouse-ear cress), this protein is Protein SUPPRESSOR OF FRI 4.